We begin with the raw amino-acid sequence, 255 residues long: Acetylglutamate kinase (255 aa).

Substrate-binding positions include 40–41, Arg-62, and Asn-153; that span reads GG.

This sequence belongs to the acetylglutamate kinase family. ArgB subfamily.

Its subcellular location is the cytoplasm. The catalysed reaction is N-acetyl-L-glutamate + ATP = N-acetyl-L-glutamyl 5-phosphate + ADP. Its pathway is amino-acid biosynthesis; L-arginine biosynthesis; N(2)-acetyl-L-ornithine from L-glutamate: step 2/4. In terms of biological role, catalyzes the ATP-dependent phosphorylation of N-acetyl-L-glutamate. The polypeptide is Acetylglutamate kinase (Bacillus cereus (strain ATCC 10987 / NRS 248)).